The sequence spans 249 residues: Myelin protein P0 (249 aa).

A signal peptide spans 1 to 29 (MALGAIGDGRLLLLLVGLLSASGPSPTLA). The Ig-like V-type domain maps to 30 to 143 (IHVYTPREVY…DIVGKSSQVT (114 aa)). The Extracellular portion of the chain corresponds to 30–153 (IHVYTPREVY…LYVLEKVPTR (124 aa)). A disulfide bridge links Cys50 with Cys127. Asn122 carries an N-linked (GlcNAc...) asparagine glycan. Residues 154–179 (YGVVLGSIIGGVLLLVALLVAVVYLV) traverse the membrane as a helical segment. The Cytoplasmic portion of the chain corresponds to 180-249 (RFCWLRRQAV…APGEARKDKK (70 aa)). Positions 227-249 (RSAKAAAEKKSKGAPGEARKDKK) are disordered.

It belongs to the myelin P0 protein family. Found only in peripheral nervous system Schwann cells.

Its subcellular location is the cell membrane. Is an adhesion molecule necessary for normal myelination in the peripheral nervous system. It mediates adhesion between adjacent myelin wraps and ultimately drives myelin compaction. The protein is Myelin protein P0 (MPZ) of Gallus gallus (Chicken).